Here is a 436-residue protein sequence, read N- to C-terminus: Methylenetetrahydrofolate--tRNA-(uracil-5-)-methyltransferase TrmFO (436 aa).

11–16 (GAGLAG) contacts FAD.

Belongs to the MnmG family. TrmFO subfamily. FAD serves as cofactor.

It is found in the cytoplasm. The catalysed reaction is uridine(54) in tRNA + (6R)-5,10-methylene-5,6,7,8-tetrahydrofolate + NADH + H(+) = 5-methyluridine(54) in tRNA + (6S)-5,6,7,8-tetrahydrofolate + NAD(+). It catalyses the reaction uridine(54) in tRNA + (6R)-5,10-methylene-5,6,7,8-tetrahydrofolate + NADPH + H(+) = 5-methyluridine(54) in tRNA + (6S)-5,6,7,8-tetrahydrofolate + NADP(+). Functionally, catalyzes the folate-dependent formation of 5-methyl-uridine at position 54 (M-5-U54) in all tRNAs. The sequence is that of Methylenetetrahydrofolate--tRNA-(uracil-5-)-methyltransferase TrmFO from Shouchella clausii (strain KSM-K16) (Alkalihalobacillus clausii).